Reading from the N-terminus, the 89-residue chain is Small ribosomal subunit protein uS15 (89 aa).

Belongs to the universal ribosomal protein uS15 family. As to quaternary structure, part of the 30S ribosomal subunit. Forms a bridge to the 50S subunit in the 70S ribosome, contacting the 23S rRNA.

One of the primary rRNA binding proteins, it binds directly to 16S rRNA where it helps nucleate assembly of the platform of the 30S subunit by binding and bridging several RNA helices of the 16S rRNA. In terms of biological role, forms an intersubunit bridge (bridge B4) with the 23S rRNA of the 50S subunit in the ribosome. The sequence is that of Small ribosomal subunit protein uS15 from Methylococcus capsulatus (strain ATCC 33009 / NCIMB 11132 / Bath).